The primary structure comprises 588 residues: Calicin (588 aa).

Positions 28 to 98 (WDMALTVDHH…FYSGKVVISE (71 aa)) constitute a BTB domain. The BACK domain maps to 133 to 235 (CLRYLFLAEL…NAVSNKTLMF (103 aa)). Phosphoserine is present on serine 149. Kelch repeat units lie at residues 280 to 327 (SVVI…AAGR), 328 to 375 (YIYI…TCGG), 377 to 423 (VYSV…TKGD), 425 to 475 (NLYI…SFHQ), 476 to 525 (DNIL…IGDS), and 526 to 580 (KVFV…LAKL).

Interacts with CYLC1; the interaction may be relevant for proper acrosome attachment to the nuclear envelope. As to expression, expressed in testis and in spermatozoa.

Its subcellular location is the cytoplasm. The protein resides in the cytoskeleton. The protein localises to the perinuclear theca. It localises to the calyx. Required for both nuclear and acrosomal shaping during spermiogenesis. In Mus musculus (Mouse), this protein is Calicin (Ccin).